The following is a 1172-amino-acid chain: DNA-directed RNA polymerase subunit beta (1172 aa).

This sequence belongs to the RNA polymerase beta chain family. In terms of assembly, the RNAP catalytic core consists of 2 alpha, 1 beta, 1 beta' and 1 omega subunit. When a sigma factor is associated with the core the holoenzyme is formed, which can initiate transcription.

It carries out the reaction RNA(n) + a ribonucleoside 5'-triphosphate = RNA(n+1) + diphosphate. Its function is as follows. DNA-dependent RNA polymerase catalyzes the transcription of DNA into RNA using the four ribonucleoside triphosphates as substrates. This is DNA-directed RNA polymerase subunit beta from Thermosipho melanesiensis (strain DSM 12029 / CIP 104789 / BI429).